We begin with the raw amino-acid sequence, 395 residues long: 1-deoxy-D-xylulose 5-phosphate reductoisomerase (395 aa).

Residues T10, G11, S12, I13, N38, and N122 each contribute to the NADPH site. K123 contacts 1-deoxy-D-xylulose 5-phosphate. E124 provides a ligand contact to NADPH. D148 serves as a coordination point for Mn(2+). Residues S149, E150, S178, and H200 each contribute to the 1-deoxy-D-xylulose 5-phosphate site. E150 contacts Mn(2+). G206 contacts NADPH. S213, N218, K219, and E222 together coordinate 1-deoxy-D-xylulose 5-phosphate. Residue E222 participates in Mn(2+) binding.

Belongs to the DXR family. Mg(2+) serves as cofactor. Mn(2+) is required as a cofactor.

The catalysed reaction is 2-C-methyl-D-erythritol 4-phosphate + NADP(+) = 1-deoxy-D-xylulose 5-phosphate + NADPH + H(+). It functions in the pathway isoprenoid biosynthesis; isopentenyl diphosphate biosynthesis via DXP pathway; isopentenyl diphosphate from 1-deoxy-D-xylulose 5-phosphate: step 1/6. In terms of biological role, catalyzes the NADPH-dependent rearrangement and reduction of 1-deoxy-D-xylulose-5-phosphate (DXP) to 2-C-methyl-D-erythritol 4-phosphate (MEP). The protein is 1-deoxy-D-xylulose 5-phosphate reductoisomerase of Elusimicrobium minutum (strain Pei191).